Here is a 111-residue protein sequence, read N- to C-terminus: BET1-like protein (111 aa).

Residues 1–86 (MADWARAQSP…MARSGRDNRK (86 aa)) lie on the Cytoplasmic side of the membrane. Residues Ser9 and Ser37 each carry the phosphoserine modification. Residues 15–77 (EILDRENKRM…TGSVKRFSTM (63 aa)) form the t-SNARE coiled-coil homology domain. Residues 87–107 (LLCGVAVGLIVAFFILSYLLS) form a helical; Anchor for type IV membrane protein membrane-spanning segment. Over 108 to 111 (RART) the chain is Lumenal.

Component of a SNARE complex consisting of STX5, YKT6, GOSR1 and BET1L. Interacts with STX5.

It is found in the golgi apparatus membrane. The protein localises to the golgi apparatus. Its subcellular location is the trans-Golgi network membrane. In terms of biological role, vesicle SNARE required for targeting and fusion of retrograde transport vesicles with the Golgi complex. Required for the integrity of the Golgi complex. The chain is BET1-like protein from Bos taurus (Bovine).